Here is a 95-residue protein sequence, read N- to C-terminus: Acylphosphatase (95 aa).

In terms of domain architecture, Acylphosphatase-like spans 5–93 (RAHLFIRGKV…GEFQDFRILP (89 aa)). Catalysis depends on residues R20 and N38.

Belongs to the acylphosphatase family.

It carries out the reaction an acyl phosphate + H2O = a carboxylate + phosphate + H(+). The polypeptide is Acylphosphatase (acyP) (Pyrobaculum arsenaticum (strain DSM 13514 / JCM 11321 / PZ6)).